A 37-amino-acid chain; its full sequence is Unknown protein 25 (37 aa).

The sequence is that of Unknown protein 25 from Pseudotsuga menziesii (Douglas-fir).